The primary structure comprises 143 residues: Transmembrane protein 207 (143 aa).

Positions Met-1–Ser-29 are cleaved as a signal peptide. A helical transmembrane segment spans residues Ile-52–Leu-72.

As to quaternary structure, interacts with WWOX.

It localises to the membrane. The polypeptide is Transmembrane protein 207 (Mus musculus (Mouse)).